A 385-amino-acid polypeptide reads, in one-letter code: Glycerol-3-phosphate dehydrogenase [NAD(+)] 1 (385 aa).

NAD(+) is bound by residues 29–34 (GSGNWG), phenylalanine 121, lysine 144, and alanine 177. Lysine 144 contributes to the substrate binding site. Catalysis depends on lysine 232, which acts as the Proton acceptor. 2 residues coordinate NAD(+): arginine 296 and glutamine 325. 296–297 (RN) lines the substrate pocket. The residue at position 376 (serine 376) is a Phosphoserine. A Phosphothreonine modification is found at threonine 382.

The protein belongs to the NAD-dependent glycerol-3-phosphate dehydrogenase family.

The protein resides in the cytoplasm. It carries out the reaction sn-glycerol 3-phosphate + NAD(+) = dihydroxyacetone phosphate + NADH + H(+). The protein is Glycerol-3-phosphate dehydrogenase [NAD(+)] 1 (gpd1) of Schizosaccharomyces pombe (strain 972 / ATCC 24843) (Fission yeast).